The primary structure comprises 408 residues: Serine/threonine transporter SstT (408 aa).

The next 9 membrane-spanning stretches (helical) occupy residues 11–31 (LANG…VSLA), 43–63 (FLGS…VFIL), 82–102 (IVVL…LLSM), 141–161 (ALMT…GLAL), 192–212 (IGIF…AIAG), 216–236 (LLAV…PLIV), 290–310 (IPLG…VLTL), 316–336 (LGIQ…AISA), and 363–383 (VAMQ…AAET).

Belongs to the dicarboxylate/amino acid:cation symporter (DAACS) (TC 2.A.23) family.

Its subcellular location is the cell inner membrane. The catalysed reaction is L-serine(in) + Na(+)(in) = L-serine(out) + Na(+)(out). It carries out the reaction L-threonine(in) + Na(+)(in) = L-threonine(out) + Na(+)(out). Involved in the import of serine and threonine into the cell, with the concomitant import of sodium (symport system). This Shewanella sp. (strain MR-4) protein is Serine/threonine transporter SstT.